We begin with the raw amino-acid sequence, 610 residues long: All-trans-retinol 13,14-reductase (610 aa).

The first 18 residues, 1-18 (MWLPLVLLLAVLLLAVLC), serve as a signal peptide directing secretion.

Belongs to the carotenoid/retinoid oxidoreductase family. CrtISO subfamily. The cofactor is NAD(+). NADP(+) serves as cofactor. FAD is required as a cofactor. In terms of tissue distribution, expressed in liver; expression positively correlates with obesity and liver steatosis. Expressed in adipose tissue; expression tends to be decreased in obese versus lean individuals.

It is found in the endoplasmic reticulum membrane. The catalysed reaction is all-trans-13,14-dihydroretinol + A = all-trans-retinol + AH2. Catalyzes the saturation of all-trans-retinol to all-trans-13,14-dihydroretinol. Does not exhibit any activity toward all-trans-retinoic acid, nor 9-cis, 11-cis or 13-cis-retinol isomers. May play a role in the metabolism of vitamin A. Independently of retinol conversion, may regulate liver metabolism upstream of MLXIPL/ChREBP. May play a role in adipocyte differentiation. This is All-trans-retinol 13,14-reductase (RETSAT) from Homo sapiens (Human).